We begin with the raw amino-acid sequence, 518 residues long: MIPDVSQALAWLEKHPQALKGIQRGLERETLRVNADGTLATTGHPEALGSALTHKWITTDFAEALLEFITPVDGDIEHMLTFMRDLHRYTARNMCDERMWPLSMPCYIAEGQDIELAQYGTSNTGRFKTLYREGLKNRYGALMQTISGVHYNFSLPMAFWQAKCGDISGADAKEKISAGYFRVIRNYYRFGWVIPYLFGASPAICSSFLQGKPTSLPFEKTECGMYYLPYATSLRLSDLGYTNKSQSNLGITFNDLYEYVAGLKQAIKTPSEEYAKIGIEKDGKRLQINSNVLQIENELYAPIRPKRVTRSGESPSDALLRGGIEYIEVRSLDINPFSPIGVDEQQVRFLDLFMVWCALADAPEMSSSELACTRVNWNRVILEGRKPGLTLGIGCETAQFPLPQVGKDLFRDLKRVAQTLDSINGGEAYQKVCDELVACFDNPDLTFSARILRSMIDTGIGGTGKAFAEAYRNLLREEPLEILREEDFVAEREASERRQQEMEAADTEPFAVWLEKHA.

Belongs to the glutamate--cysteine ligase type 1 family. Type 1 subfamily.

The catalysed reaction is L-cysteine + L-glutamate + ATP = gamma-L-glutamyl-L-cysteine + ADP + phosphate + H(+). It functions in the pathway sulfur metabolism; glutathione biosynthesis; glutathione from L-cysteine and L-glutamate: step 1/2. The chain is Glutamate--cysteine ligase from Escherichia coli O8 (strain IAI1).